A 423-amino-acid chain; its full sequence is Glutamate-1-semialdehyde 2,1-aminomutase (423 aa).

Lys-258 is subject to N6-(pyridoxal phosphate)lysine.

Belongs to the class-III pyridoxal-phosphate-dependent aminotransferase family. HemL subfamily. It depends on pyridoxal 5'-phosphate as a cofactor.

Its subcellular location is the cytoplasm. It catalyses the reaction (S)-4-amino-5-oxopentanoate = 5-aminolevulinate. The protein operates within porphyrin-containing compound metabolism; protoporphyrin-IX biosynthesis; 5-aminolevulinate from L-glutamyl-tRNA(Glu): step 2/2. In Pyrobaculum arsenaticum (strain DSM 13514 / JCM 11321 / PZ6), this protein is Glutamate-1-semialdehyde 2,1-aminomutase.